Consider the following 96-residue polypeptide: Antitoxin TacA3 (96 aa).

A neutralization domain region spans residues 61 to 96 (YLTERDTKMIMEILDNPPAPNEKLLAAAFALPDMKK).

This sequence belongs to the TacA antitoxin family. In terms of assembly, forms a complex with cognate toxin TacT3. Forms a 4:2 antitoxin:toxin complex with cognate toxin TacT3. Forms a 4:4 antitoxin:toxin complex with promoter DNA, where 2 TacT3 dimers bridge 2 TacA3 dimers. Only TacA3 contacts promoter DNA.

Functionally, antitoxin component of a type II toxin-antitoxin (TA) system. Counteracts the toxic effect of cognate toxin TacT3, but not TacT1 or TacT2. Plays a role in persister cell formation. Its function is as follows. The TacA3-TacT3 complex both represses and derepresses expression of its own operon. The hexameric 4:2 TacA3-TacT3 complex binds promoter DNA and represses its transcription; both subunits are required. The octomeric 4:4 TacA3-TacT3 complex derepresses the operon. The shift from hexameric to octomeric complex probably alters DNA-binding, leading to dissociation from the operator DNA and derepression. Does not bind the promoter of the TacA1-TacT1 operon. This is Antitoxin TacA3 from Salmonella typhimurium (strain 14028s / SGSC 2262).